The chain runs to 510 residues: Internal alternative NAD(P)H-ubiquinone oxidoreductase A1, mitochondrial (510 aa).

The transit peptide at 1-48 (MLWIKNLARISQTTSSSVGNVFRNPESYTLSSRFCTALQKQQVTDTVQ) directs the protein to the mitochondrion. 75 to 105 (RVLVLGSGWAGCRVLKGIDTSIYDVVCVSPR) is a binding site for FAD. 242–278 (LHCVVVGGGPTGVEFSGELSDFIMKDVRQRYSHVKDD) contacts NAD(+). The Microbody targeting signal signature appears at 501–510 (FVFGRDISRI).

The protein belongs to the NADH dehydrogenase family. Requires FAD as cofactor. In terms of tissue distribution, expressed in seedlings, cotyledons, young leaves, stems and flowers and, to a lower extent, in roots and buds.

Its subcellular location is the mitochondrion inner membrane. It is found in the peroxisome. It catalyses the reaction a quinone + NADH + H(+) = a quinol + NAD(+). It carries out the reaction a ubiquinone + NADH + H(+) = a ubiquinol + NAD(+). In terms of biological role, alternative NADH-ubiquinone oxidoreductase which catalyzes the oxidation of mitochondrial NADH does not translocate protons across the inner mitochondrial membrane. The protein is Internal alternative NAD(P)H-ubiquinone oxidoreductase A1, mitochondrial (NDA1) of Arabidopsis thaliana (Mouse-ear cress).